The following is a 1574-amino-acid chain: Multiple epidermal growth factor-like domains protein 6 (1574 aa).

The signal sequence occupies residues 1–27 (MPVRAEARAAWRVVALALLLLPAMPAA). The region spanning 40–122 (MPHVCAEQKL…QKPGQEGCLS (83 aa)) is the EMI domain. Disulfide bonds link Cys44-Cys108, Cys74-Cys80, Cys107-Cys120, Cys127-Cys138, Cys134-Cys147, Cys149-Cys162, Cys168-Cys179, Cys175-Cys188, Cys190-Cys203, Cys209-Cys220, Cys216-Cys230, Cys232-Cys245, Cys251-Cys262, Cys258-Cys271, Cys273-Cys286, Cys292-Cys303, Cys299-Cys312, Cys314-Cys327, Cys338-Cys349, Cys345-Cys358, Cys360-Cys373, Cys379-Cys389, Cys385-Cys398, Cys400-Cys411, Cys419-Cys430, Cys426-Cys439, Cys441-Cys454, Cys524-Cys537, Cys531-Cys544, Cys546-Cys555, Cys568-Cys580, Cys574-Cys587, Cys589-Cys598, Cys611-Cys623, Cys617-Cys630, Cys632-Cys641, Cys654-Cys668, Cys660-Cys675, Cys677-Cys686, Cys699-Cys711, Cys705-Cys718, Cys722-Cys731, Cys744-Cys755, Cys750-Cys762, Cys764-Cys773, Cys786-Cys799, Cys793-Cys806, Cys808-Cys817, Cys830-Cys842, Cys836-Cys849, Cys851-Cys860, Cys873-Cys886, Cys879-Cys893, Cys895-Cys904, Cys917-Cys929, Cys923-Cys936, Cys938-Cys947, Cys960-Cys972, Cys966-Cys979, Cys981-Cys990, Cys1003-Cys1015, Cys1009-Cys1022, Cys1024-Cys1033, Cys1046-Cys1058, Cys1052-Cys1065, Cys1067-Cys1076, Cys1089-Cys1101, Cys1095-Cys1108, Cys1110-Cys1119, Cys1132-Cys1144, Cys1138-Cys1151, Cys1153-Cys1162, Cys1175-Cys1187, Cys1181-Cys1194, Cys1196-Cys1205, Cys1218-Cys1231, Cys1224-Cys1238, Cys1240-Cys1249, Cys1262-Cys1274, Cys1268-Cys1281, Cys1283-Cys1292, Cys1305-Cys1317, Cys1311-Cys1324, Cys1326-Cys1335, Cys1348-Cys1360, Cys1354-Cys1367, Cys1369-Cys1378, Cys1391-Cys1403, Cys1397-Cys1410, Cys1412-Cys1421, Cys1434-Cys1446, Cys1440-Cys1453, Cys1455-Cys1464, Cys1477-Cys1489, Cys1483-Cys1496, Cys1498-Cys1507, Cys1520-Cys1532, Cys1526-Cys1539, and Cys1541-Cys1550. The region spanning 123 to 163 (DVDECASANGGCEGPCCNTVGGFYCRCPPGYQLQGDGKTCQ) is the EGF-like 1; calcium-binding domain. The EGF-like 2; calcium-binding domain maps to 164 to 204 (DVDECRAHNGGCQHRCVNTPGSYLCECKPGFRLHTDGRTCL). EGF-like domains are found at residues 205–246 (AISS…RRCV) and 247–287 (RRSP…KTCE). The 41-residue stretch at 288–328 (DVDECALGLAQCAHGCLNTQGSFKCVCHAGYELGADGRQCY) folds into the EGF-like 5; calcium-binding domain. EGF-like domains follow at residues 334-374 (IVNS…KTCI) and 375-412 (DIDD…DGCG). Residues 415 to 455 (DVDECASGHGGCEHHCSNLAGSFQCFCEAGYRLDEDRRGCT) enclose the EGF-like 8; calcium-binding domain. 24 consecutive EGF-like domains span residues 520–556 (FGHD…IICN), 564–599 (FGKN…AHCE), 607–642 (YGKH…RFCH), 650–687 (FGPG…ERCQ), 695–732 (FGPG…EDCG), 740–774 (FGVN…EDCG), 782–818 (WGLG…SRCQ), 826–861 (YGTG…LSCQ), 869–905 (WGPD…PRCE), 913–948 (YGPS…SFCE), 956–991 (FGLD…PRCA), 999–1034 (FGLN…PTCL), 1042–1077 (YGKN…LACE), 1085–1120 (YAAG…DKCQ), 1128–1163 (FGVH…PHCE), 1171–1206 (FGEA…LSCE), 1214–1250 (FGKD…TGCL), 1258–1293 (YGPG…ADCS), 1301–1336 (FGPS…VRCE), 1344–1379 (FGKG…PHCE), 1387–1422 (YGAA…QACE), 1430–1465 (HGPG…QFCE), 1473–1508 (FGDG…AACD), and 1516–1551 (FGPG…PTCR). Positions 1555-1568 (TQISSSRPAPQHPS) are enriched in polar residues. Positions 1555-1574 (TQISSSRPAPQHPSSRAMKH) are disordered.

As to expression, expressed in lung.

It localises to the secreted. This Rattus norvegicus (Rat) protein is Multiple epidermal growth factor-like domains protein 6 (Megf6).